The following is a 152-amino-acid chain: MEKPNMRNYYAIKVVGGQEINVALMLEERIKTNNIKGIYAIIVPPNLKGYVVLEAEGLHIVKPLIAGIRNARGLAQGLLPRDEILKIVSRKTVGPTVKPGDVVEVISGPFRGTQAQVIRVEEAKGEVVLNILESAFPLQVTVPLDQIKVSKR.

One can recognise a KOW domain in the interval Pro99–Val128.

The protein belongs to the archaeal Spt5 family. Heterodimer composed of Spt4 and Spt5. Interacts with RNA polymerase (RNAP).

Functionally, stimulates transcription elongation. The polypeptide is Transcription elongation factor Spt5 (Saccharolobus solfataricus (strain ATCC 35092 / DSM 1617 / JCM 11322 / P2) (Sulfolobus solfataricus)).